A 146-amino-acid chain; its full sequence is MTSSKKSSDNSSSSNDLYAIAETSGQQFWFEVDRYYDIDRLNAKEKDKITIDKILLIKDKENVSIGKPYIKNAKIELEVVSHKRDKKIIVYKMRPKKKTRRKMGHRQELTRVMVKSISISKSTPKSSPKTEATKKSTSSKASKPEN.

Positions 95-104 (PKKKTRRKMG) are enriched in basic residues. Residues 95–146 (PKKKTRRKMGHRQELTRVMVKSISISKSTPKSSPKTEATKKSTSSKASKPEN) are disordered. Positions 115–146 (KSISISKSTPKSSPKTEATKKSTSSKASKPEN) are enriched in low complexity.

This sequence belongs to the bacterial ribosomal protein bL21 family. Part of the 50S ribosomal subunit. Contacts protein L20.

Its function is as follows. This protein binds to 23S rRNA in the presence of protein L20. The chain is Large ribosomal subunit protein bL21 from Prochlorococcus marinus (strain MIT 9515).